The chain runs to 154 residues: Prefoldin subunit alpha (154 aa).

The disordered stretch occupies residues 119–154; the sequence is EKAEVETEMEELEQQAQQMQQQQMQQMMQQQEQEDE. A compositionally biased stretch (low complexity) spans 132–154; it reads QQAQQMQQQQMQQMMQQQEQEDE.

This sequence belongs to the prefoldin subunit alpha family. In terms of assembly, heterohexamer of two alpha and four beta subunits.

The protein localises to the cytoplasm. Its function is as follows. Molecular chaperone capable of stabilizing a range of proteins. Seems to fulfill an ATP-independent, HSP70-like function in archaeal de novo protein folding. The protein is Prefoldin subunit alpha of Haloarcula marismortui (strain ATCC 43049 / DSM 3752 / JCM 8966 / VKM B-1809) (Halobacterium marismortui).